The following is a 68-amino-acid chain: Conotoxin G1.9 (68 aa).

The first 21 residues, 1-21, serve as a signal peptide directing secretion; the sequence is MGMRMMFTVFLLVVLATTVVS. The propeptide occupies 22–44; sequence FTSRRGPKSRRGEPVPTTVINYG. 2 disulfide bridges follow: Cys-46/Cys-52 and Cys-47/Cys-61.

This sequence belongs to the conotoxin A superfamily. In terms of tissue distribution, expressed by the venom duct.

It is found in the secreted. Its function is as follows. Does not show activity on all the human nAChR subtypes studied. The polypeptide is Conotoxin G1.9 (Conus geographus (Geography cone)).